A 203-amino-acid polypeptide reads, in one-letter code: Protein Nef (203 aa).

The segment at 1-25 (MGNKWSKSWPQVRERMRRAPAPAAD) is disordered. The N-myristoyl glycine; by host moiety is linked to residue glycine 2. Serine 6 bears the Phosphoserine; by host mark. Residues 59 to 62 (TEEE) form an acidic; interacts with host PACS1 and PACS2; stabilizes the interaction of NEF/MHC-I with host AP1M1; necessary for MHC-I internalization region. An SH3-binding; interaction with Src family tyrosine kinases region spans residues 66–75 (PVKPQIPLRP). The PxxP; stabilizes the interaction of NEF/MHC-I with host AP1M1; necessary for MHC-I internalization signature appears at 69-72 (PQIP). The mediates dimerization, Nef-PTE1 interaction stretch occupies residues 105 to 121 (EILDLWVHNTQGYFPDW). Residues 145-177 (VDPSEVEEANEGENNCLLHPICQHGIEDEEREV) form a binding to ATP6V1H region. Positions 161 to 162 (LL) match the Dileucine internalization motif; necessary for CD4 internalization motif. The Diacidic; necessary for CD4 internalization signature appears at 171–172 (ED).

This sequence belongs to the lentivirus primate group Nef protein family. Monomer; cytosolic form. Homodimer; membrane bound form. Interacts with Nef associated p21-activated kinase (PAK2); this interaction activates PAK2. Associates with the Nef-MHC-I-AP1 complex; this complex is required for MHC-I internalization. Interacts (via C-terminus) with host PI3-kinase. Interacts with host PACS1; this interaction seems to be weak. Interacts with host PACS2. Interacts with host LCK and MAPK3; these interactions inhibit the kinase activity of the latter. Interacts with host ATP6V1H; this interaction may play a role in CD4 endocytosis. Associates with the CD4-Nef-AP2 complex; this complex is required for CD4 internalization. Interacts with host AP2 subunit alpha and AP2 subunit sigma2. Interacts with TCR-zeta chain; this interaction up-regulates the Fas ligand (FasL) surface expression. Interacts with host HCK, LYN, and SRC; these interactions activate the Src family kinases. Interacts with MAP3K5; this interaction inhibits the Fas and TNFR-mediated death signals. Interacts with beta-COP and PTE1. Interacts with human RACK1; this increases Nef phosphorylation by PKC. Interacts with TP53; this interaction decreases the half-life of TP53, protecting the infected cell against p53-mediated apoptosis. Post-translationally, the virion-associated Nef proteins are cleaved by the viral protease to release the soluble C-terminal core protein. Nef is probably cleaved concomitantly with viral structural proteins on maturation of virus particles. Myristoylated. In terms of processing, phosphorylated on serine residues, probably by host PKCdelta and theta.

Its subcellular location is the host cell membrane. The protein resides in the virion. It is found in the secreted. It localises to the host Golgi apparatus membrane. Factor of infectivity and pathogenicity, required for optimal virus replication. Alters numerous pathways of T-lymphocyte function and down-regulates immunity surface molecules in order to evade host defense and increase viral infectivity. Alters the functionality of other immunity cells, like dendritic cells, monocytes/macrophages and NK cells. Functionally, in infected CD4(+) T-lymphocytes, down-regulates the surface MHC-I, mature MHC-II, CD4, CD28, CCR5 and CXCR4 molecules. Mediates internalization and degradation of host CD4 through the interaction of with the cytoplasmic tail of CD4, the recruitment of AP-2 (clathrin adapter protein complex 2), internalization through clathrin coated pits, and subsequent transport to endosomes and lysosomes for degradation. Diverts host MHC-I molecules to the trans-Golgi network-associated endosomal compartments by an endocytic pathway to finally target them for degradation. MHC-I down-regulation may involve AP-1 (clathrin adapter protein complex 1) or possibly Src family kinase-ZAP70/Syk-PI3K cascade recruited by PACS2. In consequence infected cells are masked for immune recognition by cytotoxic T-lymphocytes. Decreasing the number of immune receptors also prevents reinfection by more HIV particles (superinfection). Down-regulates host SERINC3 and SERINC5 thereby excluding these proteins from the viral particles. Virion infectivity is drastically higher when SERINC3 or SERINC5 are excluded from the viral envelope, because these host antiviral proteins impair the membrane fusion event necessary for subsequent virion penetration. Its function is as follows. Bypasses host T-cell signaling by inducing a transcriptional program nearly identical to that of anti-CD3 cell activation. Interaction with TCR-zeta chain up-regulates the Fas ligand (FasL). Increasing surface FasL molecules and decreasing surface MHC-I molecules on infected CD4(+) cells send attacking cytotoxic CD8+ T-lymphocytes into apoptosis. In terms of biological role, plays a role in optimizing the host cell environment for viral replication without causing cell death by apoptosis. Protects the infected cells from apoptosis in order to keep them alive until the next virus generation is ready to strike. Inhibits the Fas and TNFR-mediated death signals by blocking MAP3K5/ASK1. Decreases the half-life of TP53, protecting the infected cell against p53-mediated apoptosis. Inhibits the apoptotic signals regulated by the Bcl-2 family proteins through the formation of a Nef/PI3-kinase/PAK2 complex that leads to activation of PAK2 and induces phosphorylation of host BAD. Extracellular Nef protein targets CD4(+) T-lymphocytes for apoptosis by interacting with CXCR4 surface receptors. In Human immunodeficiency virus type 1 group M subtype J (isolate SE9280) (HIV-1), this protein is Protein Nef.